The primary structure comprises 434 residues: Evolutionarily conserved signaling intermediate in Toll pathway, mitochondrial (434 aa).

A mitochondrion-targeting transit peptide spans 1-48 (MSWVQVNLLARGLSRGWGSICRTVLSGTPFAQPSLQARGLHCSAVTHK). Lys371 is covalently cross-linked (Glycyl lysine isopeptide (Lys-Gly) (interchain with G-Cter in ubiquitin)). Residues 403-434 (TRLEGQSPPHSPPKGPEEDDEAIQAQQRQGQS) form a disordered region.

Belongs to the ECSIT family. Interacts with MAP3K1, SMAD4 and TRAF6. Interacts with SMAD1 only after BMP4-treatment. Part of the mitochondrial complex I assembly/MCIA complex that comprises at least the core subunits TMEM126B, NDUFAF1, ECSIT and ACAD9 and complement subunits such as COA1 and TMEM186. Interacts with NDUFAF1. Interacts with ACAD9. Interacts with TRIM59. Interacts with TMEM70 and TMEM242. Interacts (when ubiquitinated) with NF-kappa-B subunits RELA and NFKB1. Interacts with RIGI, IFIT1 and MAVS; these interactions promote RLR-mediated type I IFN induction. Interacts with SQSTM1; this interaction inhibits TLR4 signaling via functional regulation of the TRAF6-ECSIT complex. Interacts with cereblon/CRBN; this interaction inhibits the ubiquitination of ECSIT. Ubiquitinated on Lys-371; leading to translocation in the nucleus together with RELA and NFKB1 and expression of NF-kappa-B-dependent genes.

It is found in the cytoplasm. It localises to the nucleus. Its subcellular location is the mitochondrion. In terms of biological role, adapter protein that plays a role in different signaling pathways including TLRs and IL-1 pathways or innate antiviral induction signaling. Plays a role in the activation of NF-kappa-B by forming a signal complex with TRAF6 and TAK1/MAP3K7 to activate TAK1/MAP3K7 leading to activation of IKKs. Once ubiquitinated, interacts with the dissociated RELA and NFKB1 proteins and translocates to the nucleus where it induces NF-kappa-B-dependent gene expression. Plays a role in innate antiviral immune response by bridging the pattern recognition receptors RIGI and MDA5/IFIT1 to the MAVS complex at the mitochondrion. Promotes proteolytic activation of MAP3K1. Involved in the BMP signaling pathway. Required for normal embryonic development. As part of the MCIA complex, involved in the assembly of the mitochondrial complex I. This is Evolutionarily conserved signaling intermediate in Toll pathway, mitochondrial from Rattus norvegicus (Rat).